The sequence spans 471 residues: Putative multidrug resistance protein MdtD (471 aa).

At 1 to 11 the chain is on the periplasmic side; that stretch reads MTELPDSTRWQ. Residues 12–32 form a helical membrane-spanning segment; the sequence is LWIVAFGFFMQSLDTTIVNTA. The Cytoplasmic portion of the chain corresponds to 33-48; the sequence is LPSMAQSLGESPLHMH. Residues 49-69 form a helical membrane-spanning segment; the sequence is MVIVSYVLTVAVMLPASGWLA. Residues 70–76 lie on the Periplasmic side of the membrane; it reads DKVGVRN. Residues 77 to 97 traverse the membrane as a helical segment; it reads IFFTAIVLFTLGSLFCALSGT. Topologically, residues 98–101 are cytoplasmic; sequence LNEL. Residues 102–124 traverse the membrane as a helical segment; sequence LLARALQGVGGAMMVPVGRLTVM. At 125–137 the chain is on the periplasmic side; the sequence is KIVPREQYMAAMT. Residues 138-158 form a helical membrane-spanning segment; it reads FVTLPGQVGPLLGPALGGLLV. Residues 159-164 lie on the Cytoplasmic side of the membrane; sequence EYASWH. The chain crosses the membrane as a helical span at residues 165 to 185; the sequence is WIFLINIPVGIIGAIATLLLM. Over 186 to 196 the chain is Periplasmic; that stretch reads PNYTMQTRRFD. The chain crosses the membrane as a helical span at residues 197 to 217; that stretch reads LSGFLLLAVGMAVLTLALDGS. Residues 218–224 are Cytoplasmic-facing; the sequence is KGTGLSP. Residues 225 to 245 form a helical membrane-spanning segment; that stretch reads LAIAGLVAVGVVALVLYLLHA. Residues 246–262 are Periplasmic-facing; it reads RNNNRALFSLKLFRTRT. Residues 263 to 283 traverse the membrane as a helical segment; sequence FSLGLAGSFAGRIGSGMLPFM. Residues 284–285 lie on the Cytoplasmic side of the membrane; it reads TP. The helical transmembrane segment at 286–306 threads the bilayer; that stretch reads VFLQIGLGFSPFHAGLMMIPM. The Periplasmic segment spans residues 307–341; the sequence is VLGSMGMKRIVVQVVNRFGYRRVLVATTLGLSLIT. A helical membrane pass occupies residues 342–362; the sequence is LLFMTTALLGWYYVLPFVLFL. At 363-395 the chain is on the cytoplasmic side; that stretch reads QGMVNSTRFSSMNTLTLKDLPDNLASSGNSLLS. The helical transmembrane segment at 396–416 threads the bilayer; the sequence is MIMQLSMSIGVTIAGLLLGLF. At 417–430 the chain is on the periplasmic side; sequence GSQHVSVDSGTTQT. The chain crosses the membrane as a helical span at residues 431-451; that stretch reads VFMYTWLSMAFIIALPAFIFA. Residues 452-471 are Cytoplasmic-facing; that stretch reads RVPNDTHQNVAISRRKRSAQ.

It belongs to the major facilitator superfamily. TCR/Tet family.

Its subcellular location is the cell inner membrane. The protein is Putative multidrug resistance protein MdtD of Shigella sonnei (strain Ss046).